We begin with the raw amino-acid sequence, 692 residues long: Elongation factor G (692 aa).

The region spanning 8–282 (ENTRNIGIMA…GVVDYLPSPL (275 aa)) is the tr-type G domain. Residues 17-24 (AHIDAGKT), 81-85 (DTPGH), and 135-138 (NKMD) each bind GTP.

This sequence belongs to the TRAFAC class translation factor GTPase superfamily. Classic translation factor GTPase family. EF-G/EF-2 subfamily.

The protein localises to the cytoplasm. In terms of biological role, catalyzes the GTP-dependent ribosomal translocation step during translation elongation. During this step, the ribosome changes from the pre-translocational (PRE) to the post-translocational (POST) state as the newly formed A-site-bound peptidyl-tRNA and P-site-bound deacylated tRNA move to the P and E sites, respectively. Catalyzes the coordinated movement of the two tRNA molecules, the mRNA and conformational changes in the ribosome. This Geobacillus thermodenitrificans (strain NG80-2) protein is Elongation factor G.